A 630-amino-acid polypeptide reads, in one-letter code: Auxin efflux carrier component 2 (630 aa).

At Met1–Asp6 the chain is on the extracellular side. A helical transmembrane segment spans residues Ile7–Ser27. At Val28–Gln38 the chain is on the cytoplasmic side. The chain crosses the membrane as a helical span at residues Cys39–Ile59. Val51 is a (indol-3-yl)acetate binding site. The Extracellular portion of the chain corresponds to Ser60–Arg70. A helical membrane pass occupies residues Phe71 to Asn91. The Cytoplasmic portion of the chain corresponds to Leu92–Trp108. The chain crosses the membrane as a helical span at residues Thr109–Leu129. Residues Asn120 and Leu122 each coordinate (indol-3-yl)acetate. Over Arg130–Ser139 the chain is Extracellular. Residues Leu140–Phe160 form a helical membrane-spanning segment. A (indol-3-yl)acetate-binding site is contributed by Tyr153. Over Glu161–Ser490 the chain is Cytoplasmic. The disordered stretch occupies residues Ala317–Ser350. Residues Pro325–Met335 are compositionally biased toward pro residues. Residues Leu491 to Ile511 form a helical membrane-spanning segment. The Extracellular portion of the chain corresponds to Lys512–Ser514. A helical transmembrane segment spans residues Ile515–Ala535. The Cytoplasmic portion of the chain corresponds to Leu536 to Thr549. Residues Phe550–Ile570 form a helical membrane-spanning segment. Over Gly571 to Gly574 the chain is Extracellular. A helical membrane pass occupies residues Val575–Phe595. (indol-3-yl)acetate contacts are provided by Ile590 and Val591. At Ala596–Ala609 the chain is on the cytoplasmic side. Residues Val610 to Ile630 traverse the membrane as a helical segment.

This sequence belongs to the auxin efflux carrier (TC 2.A.69.1) family. In terms of assembly, homodimer. As to expression, expressed in roots, leaves, shoot apex and panicles. Expressed in roots, stem bases and young panicles.

Its subcellular location is the membrane. In terms of biological role, acts as a component of the auxin efflux carrier. Involved in the basipetal polar auxin transport which contributes to the spreading growth of the tillers. The chain is Auxin efflux carrier component 2 from Oryza sativa subsp. japonica (Rice).